The sequence spans 140 residues: Translation initiation factor 2 subunit beta (140 aa).

It belongs to the eIF-2-beta/eIF-5 family. In terms of assembly, heterotrimer composed of an alpha, a beta and a gamma chain.

Its function is as follows. eIF-2 functions in the early steps of protein synthesis by forming a ternary complex with GTP and initiator tRNA. The sequence is that of Translation initiation factor 2 subunit beta (eif2b) from Pyrococcus horikoshii (strain ATCC 700860 / DSM 12428 / JCM 9974 / NBRC 100139 / OT-3).